Here is a 723-residue protein sequence, read N- to C-terminus: Nuclear hormone receptor HR96 (723 aa).

Residues 4–79 (PKNCAVCGDK…IGMKSENIMS (76 aa)) constitute a DNA-binding region (nuclear receptor). 2 NR C4-type zinc fingers span residues 7-27 (CAVCGDKALGYNFNAVTCESC) and 43-67 (CPFNQNCDITVVTRRFCQKCRLRKC). The segment at 95–163 (AKRRLMENGT…QASSPGTQVN (69 aa)) is disordered. Polar residues-rich tracts occupy residues 122 to 142 (DSSSSNLDHYSGSQDSQSCGS) and 151 to 163 (SGRQASSPGTQVN). The NR LBD domain maps to 483–723 (EQMKLRELRL…LREIFDLKNH (241 aa)).

This sequence belongs to the nuclear hormone receptor family. NR1 subfamily.

It is found in the nucleus. In terms of biological role, binds selectively to the HSP27 20E response element. In Drosophila melanogaster (Fruit fly), this protein is Nuclear hormone receptor HR96 (Hr96).